Reading from the N-terminus, the 147-residue chain is Ribosomal RNA large subunit methyltransferase H (147 aa).

Residues Leu64, Gly95, and 114–119 (LSSLTL) each bind S-adenosyl-L-methionine.

It belongs to the RNA methyltransferase RlmH family. As to quaternary structure, homodimer.

The protein resides in the cytoplasm. It carries out the reaction pseudouridine(1915) in 23S rRNA + S-adenosyl-L-methionine = N(3)-methylpseudouridine(1915) in 23S rRNA + S-adenosyl-L-homocysteine + H(+). Specifically methylates the pseudouridine at position 1915 (m3Psi1915) in 23S rRNA. The polypeptide is Ribosomal RNA large subunit methyltransferase H (Polynucleobacter asymbioticus (strain DSM 18221 / CIP 109841 / QLW-P1DMWA-1) (Polynucleobacter necessarius subsp. asymbioticus)).